The chain runs to 277 residues: Large ribosomal subunit protein uL2 (277 aa).

2 disordered regions span residues 35-58 and 213-277; these read QPLP…GGGH and WKGI…RKRK.

This sequence belongs to the universal ribosomal protein uL2 family. As to quaternary structure, part of the 50S ribosomal subunit. Forms a bridge to the 30S subunit in the 70S ribosome.

Functionally, one of the primary rRNA binding proteins. Required for association of the 30S and 50S subunits to form the 70S ribosome, for tRNA binding and peptide bond formation. It has been suggested to have peptidyltransferase activity; this is somewhat controversial. Makes several contacts with the 16S rRNA in the 70S ribosome. This Staphylococcus carnosus (strain TM300) protein is Large ribosomal subunit protein uL2.